The chain runs to 411 residues: MTEMSEKENEPDDAATHSPPGTVSALQETKLQRFKRSLSLKTILRSKSLENFFLRSGSELKCPTEVLLTPPTPLPPPSPPPTASDRGLATPSPSPCPVPRPLAALKPVRLHSFQEHVFKRASPCELCHQLIVGNSKQGLRCKMCKVSVHLWCSEEISHQQCPGKTSTSFRRNFSSPLLVHEPPPVCATSKESPPTGDSGKVDPVYETLRYGTSLALMNRSSFSSTSESPTRSLSERDELTEDGEGSIRSSEEGPGDSASPVFTAPAESEGPGPEEKSPGQQLPKATLRKDVGPMYSYVALYKFLPQENNDLALQPGDRIMLVDDSNEDWWKGKIGDRVGFFPANFVQRVRPGENVWRCCQPFSGNKEQGYMSLKENQICVGVGRSKDADGFIRVSSGKKRGLVPVDALTEI.

Positions 1 to 29 are disordered; the sequence is MTEMSEKENEPDDAATHSPPGTVSALQET. Residues 19–29 are compositionally biased toward polar residues; sequence PPGTVSALQET. Serine 48 carries the phosphoserine modification. The segment at 64-95 is disordered; the sequence is TEVLLTPPTPLPPPSPPPTASDRGLATPSPSP. Over residues 70–82 the composition is skewed to pro residues; the sequence is PPTPLPPPSPPPT. A Phorbol-ester/DAG-type zinc finger spans residues 110–161; the sequence is LHSFQEHVFKRASPCELCHQLIVGNSKQGLRCKMCKVSVHLWCSEEISHQQC. Disordered regions lie at residues 174-203 and 219-288; these read SSPL…KVDP and RSSF…ATLR. Over residues 219–232 the composition is skewed to low complexity; it reads RSSFSSTSESPTRS. SH3 domains are found at residues 292-351 and 354-411; these read GPMY…RVRP and NVWR…LTEI.

Interacts (via SH3 domains) with CACNA1S. Interacts (via SH3 domains) with CACNA1C. Has much lower affinity for CACNA1C than for CACNA1S.

It localises to the cytoplasm. The protein resides in the cytosol. Its subcellular location is the cell membrane. It is found in the sarcolemma. In terms of biological role, plays a redundant role in promoting the expression of calcium channel CACNA1S at the cell membrane, and thereby contributes to increased channel activity. Slows down the inactivation rate of the calcium channel CACNA1C. This chain is SH3 and cysteine-rich domain-containing protein 2 (STAC2), found in Homo sapiens (Human).